The primary structure comprises 163 residues: Probable chemoreceptor glutamine deamidase CheD (163 aa).

This sequence belongs to the CheD family.

It catalyses the reaction L-glutaminyl-[protein] + H2O = L-glutamyl-[protein] + NH4(+). Functionally, probably deamidates glutamine residues to glutamate on methyl-accepting chemotaxis receptors (MCPs), playing an important role in chemotaxis. This Borreliella afzelii (strain PKo) (Borrelia afzelii) protein is Probable chemoreceptor glutamine deamidase CheD.